The primary structure comprises 779 residues: DNA topoisomerase 1 (779 aa).

The region spanning 1-111 (MKLVIVESPA…VESDDFFKRV (111 aa)) is the Toprim domain. Mg(2+) is bound by residues E7 and D80. Residues 132–568 (DTNLVNAQQA…FWSGFNNNIE (437 aa)) enclose the Topo IA-type catalytic domain. Positions 166–171 (SAGRVQ) are interaction with DNA. Y304 serves as the catalytic O-(5'-phospho-DNA)-tyrosine intermediate. The segment at 600–627 (CPSCKTGQLSLKLGKFGAFLACSNYPEC) adopts a C4-type zinc-finger fold.

Belongs to the type IA topoisomerase family. In terms of assembly, monomer. Mg(2+) is required as a cofactor.

The catalysed reaction is ATP-independent breakage of single-stranded DNA, followed by passage and rejoining.. In terms of biological role, releases the supercoiling and torsional tension of DNA, which is introduced during the DNA replication and transcription, by transiently cleaving and rejoining one strand of the DNA duplex. Introduces a single-strand break via transesterification at a target site in duplex DNA. The scissile phosphodiester is attacked by the catalytic tyrosine of the enzyme, resulting in the formation of a DNA-(5'-phosphotyrosyl)-enzyme intermediate and the expulsion of a 3'-OH DNA strand. The free DNA strand then undergoes passage around the unbroken strand, thus removing DNA supercoils. Finally, in the religation step, the DNA 3'-OH attacks the covalent intermediate to expel the active-site tyrosine and restore the DNA phosphodiester backbone. This is DNA topoisomerase 1 from Rickettsia typhi (strain ATCC VR-144 / Wilmington).